A 551-amino-acid polypeptide reads, in one-letter code: MNSTILLAQDAVSEGVGNPILNISVFVVFIIVTMTVVLRVGKSTSESTDFYTGGASFSGTQNGLAIAGDYLSAASFLGIVGAISLNGYDGFLYSIGFFVAWLVALLLVAEPLRNVGRFTMADVLSFRLRQKPVRVAAACGTLAVTLFYLIAQMAGAGSLVSVLLDIHEFKWQAVVVGIVGIVMIAYVLLGGMKGTTYVQMIKAVLLVGGVAIMTVLTFVKVSGGLTTLLNDAVEKHAASDYAATKGYDPTQILEPGLQYGATLTTQLDFISLALALCLGTAGLPHVLMRFYTVPTAKEARKSVTWAIVLIGAFYLMTLVLGYGAAALVGPDRVIAAPGAANAAAPLLAFELGGSIFMALISAVAFATVLAVVAGLAITASAAVGHDIYNAVIRNGQSTEAEQVRVSRITVVVIGLISIVLGILAMTQNVAFLVALAFAVAASANLPTILYSLYWKKFNTTGAVAAIYTGLISALLLIFLSPAVSGNDSAMVPGADWAIFPLKNPGLVSIPLAFIAGWIGTLVGKPDNMDDLAAEMEVRSLTGVGVEKAVDH.

Transmembrane regions (helical) follow at residues 18–38 (NPIL…TVVL), 63–83 (GLAI…VGAI), 90–110 (GFLY…LVAE), 144–164 (VTLF…SVLL), 171–191 (WQAV…LLGG), 203–223 (AVLL…KVSG), 267–287 (LDFI…PHVL), 307–327 (IVLI…AAAL), 355–375 (IFMA…VAGL), 411–431 (VVIG…NVAF), 432–452 (LVAL…LYSL), 463–483 (VAAI…SPAV), and 503–523 (NPGL…TLVG).

It belongs to the sodium:solute symporter (SSF) (TC 2.A.21) family.

It localises to the cell membrane. Its function is as follows. Acts as a secondary carrier for acetate, propionate and pyruvate. Has high affinity for acetate and propionate and lower affinity for pyruvate. Driven by the electrochemical proton potential. The sequence is that of Monocarboxylic acid transporter from Corynebacterium glutamicum (strain ATCC 13032 / DSM 20300 / JCM 1318 / BCRC 11384 / CCUG 27702 / LMG 3730 / NBRC 12168 / NCIMB 10025 / NRRL B-2784 / 534).